A 195-amino-acid polypeptide reads, in one-letter code: MARTARVERKTKESHVLIELDLDGTGLASAETGVPFFDHMMEQLGKHGGFDLTVRTEGDLHIDAHHTVEDTAIAFGTALREALGDKAGIRRFGDATVPLDEALVQSAVDLSGRPYCVHVEPELVGLIGTYDTTLTRHIFESITASARIALHVRVLSGRNAHHVVEAQFKSVARAMRDAVALDARVAGVPSTKGVL.

It belongs to the imidazoleglycerol-phosphate dehydratase family.

The protein localises to the cytoplasm. It catalyses the reaction D-erythro-1-(imidazol-4-yl)glycerol 3-phosphate = 3-(imidazol-4-yl)-2-oxopropyl phosphate + H2O. The protein operates within amino-acid biosynthesis; L-histidine biosynthesis; L-histidine from 5-phospho-alpha-D-ribose 1-diphosphate: step 6/9. The chain is Imidazoleglycerol-phosphate dehydratase from Parafrankia sp. (strain EAN1pec).